Here is a 749-residue protein sequence, read N- to C-terminus: MKKKSLTELISDLKGNENVVNWHEIEPREAKTRPMPESIDERIKAALSKRGIDELYTHQYSAFQYVQKGESIVTVTPTASGKTLCYNLPVLQSIAQDETNRALYLFPTKALAQDQKSELNEIIDEMGIDIKSFTYDGDTSPAIRQKVRKAGHIVITNPDMLHSAILPHHTKWVSLFENLKYIVIDELHTYRGVFGSHVANVIRRLKRICRFYGSDPVFICTSATIANPKELGEQLTGKPMRLVDDNGAPSGRKHFVFYNPPIVNKPLNIRRSATAEVNELAKEFLKNKVQTIVFARSRVRVEIILSHIQELVKKEIGTKSIRGYRGGYLPKERREIERGLREGDILGVVSTNALELGVDIGQLQVCVMTGYPGSVASAWQQAGRAGRRHGESLIIMVANSTPIDQYIVRHPEYFFNRSPESARINPENLIILVDHLKCAAYELPFRADEEFGAMEVSDILEYLQEEAVLHRNGERYHWASESFPASNISLRSASQENVVIVDQSDIANVRIIGEMDRFSAMTLLHDEAIYLHEGVQYQVEKLDWDHKKAYVRKVDVEYYTDANLAVQLKVLEIDKTKEKSRTSLHYGDVTVNALPTIFKKIKMTTFENIGSGPIHLPEEELHTSAAWLEIKTADEDIGEKTLEQLLLGISNVLQHIVPVYIMCDRNDVHVVSQIKAAHTGLPTIFLYDHYPGGIGLAEEVFKRFSDINEAAKQLITHCPCHDGCPSCIGTEIEGIKAKERILQLLDQMS.

Residues 63–243 form the Helicase ATP-binding domain; that stretch reads FQYVQKGESI…QLTGKPMRLV (181 aa). 76 to 83 is an ATP binding site; sequence TPTASGKT. The DEVH box motif lies at 185–188; it reads DELH. The 155-residue stretch at 276–430 folds into the Helicase C-terminal domain; sequence EVNELAKEFL…SARINPENLI (155 aa).

Belongs to the helicase family.

This is an uncharacterized protein from Bacillus subtilis (strain 168).